The chain runs to 588 residues: L-fucose isomerase (588 aa).

Residues Glu-335 and Asp-359 each act as proton acceptor in the active site. The Mn(2+) site is built by Glu-335, Asp-359, and His-525.

The protein belongs to the L-fucose isomerase family. The cofactor is Mn(2+).

It is found in the cytoplasm. The catalysed reaction is L-fucose = L-fuculose. Its pathway is carbohydrate degradation; L-fucose degradation; L-lactaldehyde and glycerone phosphate from L-fucose: step 1/3. Functionally, converts the aldose L-fucose into the corresponding ketose L-fuculose. In Streptococcus pneumoniae (strain P1031), this protein is L-fucose isomerase.